Here is a 328-residue protein sequence, read N- to C-terminus: Dof zinc finger protein PBF (328 aa).

The tract at residues 33–56 is disordered; sequence RDPKQTRAMPQIGGSGERKPRPQL. The Dof-type zinc-finger motif lies at 60–114; the sequence is LKCPRCDSNNTKFCYYNNYSMSQPRYFCKACRRYWTHGGTLRNVPIGGGCRKNKH. Zn(2+) contacts are provided by Cys62, Cys65, Cys87, and Cys90. Disordered stretches follow at residues 124–144 and 306–328; these read TSSS…ASSS and WNKH…NKGQ.

Interacts with the bZIP transcription factor Opaque-2/O2. In terms of tissue distribution, seed endosperm.

The protein resides in the nucleus. In terms of biological role, transcription factor that binds specifically to a 5'-AA[AG]G-3' consensus core sequence. May enhance the DNA binding of the bZIP transcription factor Opaque-2 to O2 binding site elements. This chain is Dof zinc finger protein PBF (PBF), found in Zea mays (Maize).